Here is a 1375-residue protein sequence, read N- to C-terminus: DNA-directed RNA polymerase subunit beta (1375 aa).

Belongs to the RNA polymerase beta chain family. As to quaternary structure, the RNAP catalytic core consists of 2 alpha, 1 beta, 1 beta' and 1 omega subunit. When a sigma factor is associated with the core the holoenzyme is formed, which can initiate transcription.

The catalysed reaction is RNA(n) + a ribonucleoside 5'-triphosphate = RNA(n+1) + diphosphate. In terms of biological role, DNA-dependent RNA polymerase catalyzes the transcription of DNA into RNA using the four ribonucleoside triphosphates as substrates. This chain is DNA-directed RNA polymerase subunit beta, found in Campylobacter jejuni subsp. jejuni serotype O:6 (strain 81116 / NCTC 11828).